The following is a 246-amino-acid chain: UDP-N-acetyl-D-mannosaminuronic acid transferase (246 aa).

This sequence belongs to the glycosyltransferase 26 family.

It carries out the reaction UDP-N-acetyl-alpha-D-mannosaminouronate + N-acetyl-alpha-D-glucosaminyl-di-trans,octa-cis-undecaprenyl diphosphate = beta-D-ManNAcA-(1-&gt;4)-alpha-D-GlcNAc-di-trans,octa-cis-undecaprenyl diphosphate + UDP + H(+). It functions in the pathway bacterial outer membrane biogenesis; enterobacterial common antigen biosynthesis. In terms of biological role, catalyzes the synthesis of Und-PP-GlcNAc-ManNAcA (Lipid II), the second lipid-linked intermediate involved in enterobacterial common antigen (ECA) synthesis. The polypeptide is UDP-N-acetyl-D-mannosaminuronic acid transferase (Salmonella schwarzengrund (strain CVM19633)).